A 135-amino-acid chain; its full sequence is Galectin-1 (135 aa).

Residue A2 is modified to N-acetylalanine. A Galectin domain is found at 4-135 (GLVASNLNLK…DFKIKCVAFE (132 aa)). Residues K13 and K29 each carry the N6-acetyllysine modification. The residue at position 30 (S30) is a Phosphoserine. A beta-D-galactoside-binding positions include 45 to 49 (HFNPR), H53, N62, and 69 to 72 (WGAE). At K108 the chain carries N6-acetyllysine; alternate. N6-succinyllysine; alternate is present on K108. An N6-acetyllysine modification is found at K128.

As to quaternary structure, homodimer. Binds LGALS3BP. Interacts with CD2, CD3, CD4, CD6, CD7, CD43, ALCAM and CD45. Interacts with laminin (via poly-N-acetyllactosamine). Interacts with SUSD2. Interacts with cargo receptor TMED10; the interaction mediates the translocation from the cytoplasm into the ERGIC (endoplasmic reticulum-Golgi intermediate compartment) and thereby secretion.

It is found in the secreted. It localises to the extracellular space. The protein resides in the extracellular matrix. The protein localises to the cytoplasm. In terms of biological role, lectin that binds beta-galactoside and a wide array of complex carbohydrates. Plays a role in regulating apoptosis, cell proliferation and cell differentiation. Inhibits CD45 protein phosphatase activity and therefore the dephosphorylation of Lyn kinase. Strong inducer of T-cell apoptosis. In Ovis aries (Sheep), this protein is Galectin-1 (LGALS1).